Consider the following 88-residue polypeptide: Small ribosomal subunit protein uS15 (88 aa).

The protein belongs to the universal ribosomal protein uS15 family. Part of the 30S ribosomal subunit. Forms a bridge to the 50S subunit in the 70S ribosome, contacting the 23S rRNA.

In terms of biological role, one of the primary rRNA binding proteins, it binds directly to 16S rRNA where it helps nucleate assembly of the platform of the 30S subunit by binding and bridging several RNA helices of the 16S rRNA. Forms an intersubunit bridge (bridge B4) with the 23S rRNA of the 50S subunit in the ribosome. The sequence is that of Small ribosomal subunit protein uS15 from Geobacter sp. (strain M21).